Consider the following 300-residue polypeptide: Protoheme IX farnesyltransferase (300 aa).

The next 8 helical transmembrane spans lie at V24–V44, W46–I66, P94–F114, L118–L138, I146–G166, A172–L192, V224–L244, and I278–L298.

This sequence belongs to the UbiA prenyltransferase family. Protoheme IX farnesyltransferase subfamily.

The protein resides in the cell inner membrane. The catalysed reaction is heme b + (2E,6E)-farnesyl diphosphate + H2O = Fe(II)-heme o + diphosphate. The protein operates within porphyrin-containing compound metabolism; heme O biosynthesis; heme O from protoheme: step 1/1. In terms of biological role, converts heme B (protoheme IX) to heme O by substitution of the vinyl group on carbon 2 of heme B porphyrin ring with a hydroxyethyl farnesyl side group. The sequence is that of Protoheme IX farnesyltransferase from Burkholderia ambifaria (strain ATCC BAA-244 / DSM 16087 / CCUG 44356 / LMG 19182 / AMMD) (Burkholderia cepacia (strain AMMD)).